The following is a 293-amino-acid chain: ATP synthase gamma chain (293 aa).

It belongs to the ATPase gamma chain family. As to quaternary structure, F-type ATPases have 2 components, CF(1) - the catalytic core - and CF(0) - the membrane proton channel. CF(1) has five subunits: alpha(3), beta(3), gamma(1), delta(1), epsilon(1). CF(0) has three main subunits: a, b and c.

The protein resides in the cell inner membrane. Its function is as follows. Produces ATP from ADP in the presence of a proton gradient across the membrane. The gamma chain is believed to be important in regulating ATPase activity and the flow of protons through the CF(0) complex. The chain is ATP synthase gamma chain from Psychrobacter cryohalolentis (strain ATCC BAA-1226 / DSM 17306 / VKM B-2378 / K5).